Here is a 373-residue protein sequence, read N- to C-terminus: Dual-specificity RNA methyltransferase RlmN (373 aa).

The Proton acceptor role is filled by glutamate 94. Residues 100 to 339 (EEDRATLCVS…VIVRKTRGDD (240 aa)) form the Radical SAM core domain. Cysteine 107 and cysteine 344 are joined by a disulfide. [4Fe-4S] cluster-binding residues include cysteine 114, cysteine 118, and cysteine 121. S-adenosyl-L-methionine contacts are provided by residues 168-169 (GE), serine 200, 222-224 (SIH), and asparagine 301. The active-site S-methylcysteine intermediate is cysteine 344.

Belongs to the radical SAM superfamily. RlmN family. [4Fe-4S] cluster serves as cofactor.

Its subcellular location is the cytoplasm. The catalysed reaction is adenosine(2503) in 23S rRNA + 2 reduced [2Fe-2S]-[ferredoxin] + 2 S-adenosyl-L-methionine = 2-methyladenosine(2503) in 23S rRNA + 5'-deoxyadenosine + L-methionine + 2 oxidized [2Fe-2S]-[ferredoxin] + S-adenosyl-L-homocysteine. It catalyses the reaction adenosine(37) in tRNA + 2 reduced [2Fe-2S]-[ferredoxin] + 2 S-adenosyl-L-methionine = 2-methyladenosine(37) in tRNA + 5'-deoxyadenosine + L-methionine + 2 oxidized [2Fe-2S]-[ferredoxin] + S-adenosyl-L-homocysteine. In terms of biological role, specifically methylates position 2 of adenine 2503 in 23S rRNA and position 2 of adenine 37 in tRNAs. m2A2503 modification seems to play a crucial role in the proofreading step occurring at the peptidyl transferase center and thus would serve to optimize ribosomal fidelity. The protein is Dual-specificity RNA methyltransferase RlmN of Shewanella loihica (strain ATCC BAA-1088 / PV-4).